The sequence spans 141 residues: VLTEEDKSRVRAAWGPVSKNAELYGAETLTRLFTAYPATKTYFHHFDLSPGSSNLKTHGKKVIDAITEAVNNLDDVAGALSKLSDLHAQKLRVDPVNFKLLGHCLEVTIAAHNGGPLKPEVILSLDKFLCLVAKTLVSRYR.

A Globin domain is found at Val1–Arg141. His58 is an O2 binding site. His87 contributes to the heme b binding site.

The protein belongs to the globin family. As to quaternary structure, heterotetramer of two alpha chains and two beta chains. Red blood cells.

In terms of biological role, involved in oxygen transport from the lung to the various peripheral tissues. The protein is Hemoglobin subunit alpha-A of Drymarchon melanurus erebennus (Texas indigo snake).